Here is a 987-residue protein sequence, read N- to C-terminus: Leucine--tRNA ligase (987 aa).

The 'HIGH' region motif lies at Pro-69–His-80. The 'KMSKS' region motif lies at Lys-760 to Ser-764. An ATP-binding site is contributed by Lys-763.

Belongs to the class-I aminoacyl-tRNA synthetase family.

The protein resides in the cytoplasm. It catalyses the reaction tRNA(Leu) + L-leucine + ATP = L-leucyl-tRNA(Leu) + AMP + diphosphate. This Bifidobacterium longum (strain DJO10A) protein is Leucine--tRNA ligase.